The sequence spans 380 residues: Crotonobetainyl-CoA reductase (380 aa).

This sequence belongs to the acyl-CoA dehydrogenase family. In terms of assembly, homotetramer. FAD serves as cofactor.

The protein resides in the cytoplasm. The catalysed reaction is 4-(trimethylamino)butanoyl-CoA + oxidized [electron-transfer flavoprotein] + H(+) = crotonobetainyl-CoA + reduced [electron-transfer flavoprotein]. It participates in amine and polyamine metabolism; carnitine metabolism. In terms of biological role, catalyzes the reduction of crotonobetainyl-CoA to gamma-butyrobetainyl-CoA. This chain is Crotonobetainyl-CoA reductase, found in Escherichia coli (strain UTI89 / UPEC).